Here is a 269-residue protein sequence, read N- to C-terminus: Formamidopyrimidine-DNA glycosylase (269 aa).

P2 functions as the Schiff-base intermediate with DNA in the catalytic mechanism. E3 functions as the Proton donor in the catalytic mechanism. K57 (proton donor; for beta-elimination activity) is an active-site residue. DNA is bound by residues H90, R109, and K150. Residues Q235–K269 form an FPG-type zinc finger. R259 acts as the Proton donor; for delta-elimination activity in catalysis.

The protein belongs to the FPG family. Monomer. Zn(2+) serves as cofactor.

The enzyme catalyses Hydrolysis of DNA containing ring-opened 7-methylguanine residues, releasing 2,6-diamino-4-hydroxy-5-(N-methyl)formamidopyrimidine.. The catalysed reaction is 2'-deoxyribonucleotide-(2'-deoxyribose 5'-phosphate)-2'-deoxyribonucleotide-DNA = a 3'-end 2'-deoxyribonucleotide-(2,3-dehydro-2,3-deoxyribose 5'-phosphate)-DNA + a 5'-end 5'-phospho-2'-deoxyribonucleoside-DNA + H(+). Its function is as follows. Involved in base excision repair of DNA damaged by oxidation or by mutagenic agents. Acts as a DNA glycosylase that recognizes and removes damaged bases. Has a preference for oxidized purines, such as 7,8-dihydro-8-oxoguanine (8-oxoG). Has AP (apurinic/apyrimidinic) lyase activity and introduces nicks in the DNA strand. Cleaves the DNA backbone by beta-delta elimination to generate a single-strand break at the site of the removed base with both 3'- and 5'-phosphates. The polypeptide is Formamidopyrimidine-DNA glycosylase (Salmonella paratyphi C (strain RKS4594)).